The chain runs to 355 residues: Protein ECERIFERUM 16 (355 aa).

Disordered stretches follow at residues 1-60 (MDSK…LPSN) and 296-315 (HSST…KIHM). Over residues 7-28 (AKSKRAHTLHHSKKSHSVHKPK) the composition is skewed to basic residues. 2 stretches are compositionally biased toward polar residues: residues 41–53 (QGNQ…QSRR) and 296–310 (HSST…NPSD).

In terms of assembly, interacts with RST1. In terms of tissue distribution, expressed in taproots, lateral roots, root tips, leaf veins, cauline leaves, inflorescences, flowers, and siliques.

It is found in the cytoplasm. The protein resides in the cytosol. The protein localises to the endoplasmic reticulum. In terms of biological role, together with RST1, acts as a cofactor of the cytoplasmic exosome and connects the cytosolic RNA exosome to the SKI complex. Acts as a post-transcriptional gene silencing (PTGS) suppressor. CER16/RIPR can, like RST1 suppress the production of small interfering RNAs (siRNAs) from the CER3 locus, which is involved in cuticule membrane and wax production, and in the typhine and sporopollenin biosynthesis of pollen. The protein is Protein ECERIFERUM 16 of Arabidopsis thaliana (Mouse-ear cress).